The sequence spans 504 residues: Endochitinase (504 aa).

A signal peptide spans 1–22; it reads MNRTTLILFFIILSNTITVIHG. In terms of domain architecture, GH18 spans 23 to 392; sequence YVRGCYYTNW…NAISSELEGE (370 aa). A disulfide bridge connects residues C27 and C52. Chitin-binding positions include 78–79 and 105–108; these read TE and GGYN. E148 acts as the Proton donor in catalysis. Chitin-binding positions include Y149, 212–215, and W362; that span reads MSYD. Residues 389–450 are disordered; sequence LEGESENPEI…YDTDETEGQE (62 aa). A compositionally biased stretch (low complexity) spans 396–408; that stretch reads PEITTEEPSITET. 2 repeat units span residues 407-420 and 421-434. The tract at residues 407–448 is 3 X 14 AA approximate tandem repeats of E-T-E-A-Y-[ED]-T-D-E-T-E-E-T-S; that stretch reads ETEAYETDETEETSETEAYDTDETEETSETEATTYDTDETEG. Acidic residues predominate over residues 409–435; it reads EAYETDETEETSETEAYDTDETEETSE. A 3; approximate repeat occupies 435 to 448; it reads ETEATTYDTDETEG. Positions 448 to 504 constitute a Chitin-binding type-2 domain; that stretch reads GQECPERDGLFPHPTDCHLFIQCANNIAYVMQCPATTFFNDAIKVCDHMTNAPDTCI. C480 and C493 form a disulfide bridge.

Belongs to the glycosyl hydrolase 18 family. Chitinase class II subfamily. In terms of processing, O-glycosylated.

It catalyses the reaction Random endo-hydrolysis of N-acetyl-beta-D-glucosaminide (1-&gt;4)-beta-linkages in chitin and chitodextrins.. Its function is as follows. Microfilarial chitinase, which may function to degrade chitin-containing structures in the micro-filaria or in its mosquito vector during parasite development and transmission. This is Endochitinase from Brugia malayi (Filarial nematode worm).